Here is a 474-residue protein sequence, read N- to C-terminus: 6-phospho-beta-galactosidase (474 aa).

Positions 19, 116, 159, 160, and 297 each coordinate D-galactose 6-phosphate. Glutamate 160 acts as the Proton donor in catalysis. Glutamate 375 (nucleophile) is an active-site residue. 4 residues coordinate D-galactose 6-phosphate: serine 433, tryptophan 434, lysine 440, and tyrosine 442.

The protein belongs to the glycosyl hydrolase 1 family.

The enzyme catalyses a 6-phospho-beta-D-galactoside + H2O = D-galactose 6-phosphate + an alcohol. Its pathway is carbohydrate metabolism; lactose degradation; D-galactose 6-phosphate and beta-D-glucose from lactose 6-phosphate: step 1/1. This Lacticaseibacillus rhamnosus (Lactobacillus rhamnosus) protein is 6-phospho-beta-galactosidase.